The chain runs to 112 residues: cAMP-regulated phosphoprotein 19 (112 aa).

An N-acetylmethionine modification is found at methionine 1. The segment covering 1–11 has biased composition (low complexity); it reads MSAEVPEAASA. The segment at 1–49 is disordered; the sequence is MSAEVPEAASAEEQKEMEDKVTSPEKAEEAKLKARYPHLGQKPGGSDFL. At serine 2 the chain carries N-acetylserine. A phosphoserine mark is found at serine 2 and serine 23. Positions 12 to 32 are enriched in basic and acidic residues; sequence EEQKEMEDKVTSPEKAEEAKL. Phosphoserine; by GWL occurs at positions 62 and 104. Residues 74–112 are disordered; it reads NKQLPAAAPDKTEVTGDHIPTPQDLPQRKPSLVASKLAG. Serine 104 carries the post-translational modification Phosphoserine; by PKA. Lysine 109 is subject to N6-acetyllysine.

Belongs to the endosulfine family. As to quaternary structure, interacts (when phosphorylated at Ser-62) with PPP2R2D. Interacts with SNCA. Interacts with PPP2R2A; the interaction is direct and this interaction inhibits PP2A activity. Phosphorylation at Ser-62 by MASTL/GWL during mitosis is essential for interaction with PPP2R2D (PR55-delta) and subsequent inactivation of PP2A. Phosphorylated by PKA.

The protein resides in the cytoplasm. Protein phosphatase inhibitor that specifically inhibits protein phosphatase 2A (PP2A) during mitosis. Inhibition of PP2A is enhanced when ARPP19 is phosphorylated. When phosphorylated at Ser-62 during mitosis, specifically interacts with PPP2R2D (PR55-delta) and inhibits its activity, leading to inactivation of PP2A, an essential condition to keep cyclin-B1-CDK1 activity high during M phase. May indirectly enhance GAP-43 expression by binding to the NGF-regulatory region of its mRNA. The chain is cAMP-regulated phosphoprotein 19 (Arpp19) from Mus musculus (Mouse).